The chain runs to 463 residues: METVLVKQLYRETEKFAGKEVKISGWIRTLRASNKFGFIEVNDGSFFKNIQVVFGAELENFKEISKYAISSSISVEGEVVITEGAKQPFEIHAKKVVLEGKSDADYPLQKKRHTFEYLRSIAHLRPRSNAFSAVFRVRSLAAYAIHKFFQDQGFVYVHTPIITGSDCEGAGEMFRVTTLDMENPPKDEKGNVDYKEDFFGKQANLTVSGQLEAEIYALAFRNVYTFGPTFRAENSNTARHASEFWMIEPEMAFAELKDYMDVAEQMVKYIINYVRENAPEEMEFFNKFIDKGLLERLDNVVNSDFARISYTEAVEILQKSGAEFEYPVEWGIDLQTEHERYLTEQIYKKPVFVTDYPKDIKAFYMRMNDDNKTVAAADLLVPGIGEIIGGSQREERLDILEARMAELGLEKEDYWWYLELRKYGETKHAGYGLGFERMIMYLTGMGNIRDVIPFPRTPGVSEF.

The protein belongs to the class-II aminoacyl-tRNA synthetase family. As to quaternary structure, homodimer.

The protein resides in the cytoplasm. The catalysed reaction is tRNA(Asn) + L-asparagine + ATP = L-asparaginyl-tRNA(Asn) + AMP + diphosphate + H(+). In Clostridium novyi (strain NT), this protein is Asparagine--tRNA ligase.